Here is a 1491-residue protein sequence, read N- to C-terminus: Membrane-associated guanylate kinase, WW and PDZ domain-containing protein 1 (1491 aa).

The PDZ 1 domain maps to 17–105 (ECTVKRGPQG…AVTFKAVRQG (89 aa)). The Guanylate kinase-like domain maps to 96-287 (AVTFKAVRQG…APITDPSQKF (192 aa)). 103-110 (RQGGRLNK) contacts ATP. Residues 236 to 267 (AENEEEDDVPEMNSSFTADSGEQEEHTLQETA) form a disordered region. The WW 1 domain occupies 300-333 (GPLPENWEMAYTENGEVYFIDHNTKTTSWLDPRC). Ser357 is subject to Phosphoserine. The region spanning 359–392 (LELPAGWEKIEDPVYGIYYVDHINRKTQYENPVL) is the WW 2 domain. Positions 411–421 (QQQQQQQQQQQ) are enriched in low complexity. The tract at residues 411-462 (QQQQQQQQQQQTEEWTEDHSALVPPVIPNHPPSNPEPAREVPLQGKPFFTRN) is disordered. Residues 435–445 (PVIPNHPPSNP) are compositionally biased toward pro residues. A PDZ 2 domain is found at 472 to 554 (HTKLRKSSRG…GASVDLELCR (83 aa)). Residues 586–600 (QETYDSPASHSSKTG) are compositionally biased toward polar residues. Disordered regions lie at residues 586–623 (QETY…SSHG), 720–832 (QRGG…FGEC), and 932–987 (TENE…GGGS). One can recognise a PDZ 3 domain in the interval 643 to 721 (TVHIVKGPMG…GSEVTLLVQR (79 aa)). Phosphoserine occurs at positions 730 and 741. Low complexity predominate over residues 742–752 (QNSSQHSVSSH). Residues 756–766 (HTASPSHSTQV) are compositionally biased toward polar residues. Ser800 is modified (phosphoserine). The 83-residue stretch at 813-895 (SGLSKGERER…DELICVDGTP (83 aa)) folds into the PDZ 4 domain. The segment covering 939-951 (PASSHHSSNQPAS) has biased composition (polar residues). The region spanning 970–1066 (SSGSGSTSGI…DRILAVNGCS (97 aa)) is the PDZ 5 domain. Residues 970 to 1066 (SSGSGSTSGI…DRILAVNGCS (97 aa)) form an interaction with FCHSD2 region. Over residues 975 to 987 (STSGIGSGGGGGS) the composition is skewed to gly residues. Ser1071 carries the phosphoserine modification. The segment covering 1112 to 1130 (TTTHTPSQQGTQETRNTTK) has biased composition (polar residues). Disordered regions lie at residues 1112–1143 (TTTH…KAPQ) and 1234–1491 (DGSV…DLSI). The PDZ 6 domain maps to 1124–1206 (ETRNTTKPKQ…DEILEINGET (83 aa)). Basic and acidic residues-rich tracts occupy residues 1278-1338 (DLHK…DAQA), 1354-1396 (KRRE…DGSP), and 1403-1491 (LERL…DLSI). Ser1361 and Ser1412 each carry phosphoserine.

In terms of assembly, part of a complex composed of AMOTL2, MAGI1 and CDH5, within the complex AMOTL2 acts as a scaffold protein for the interaction of MAGI1 with CDH5. The complex is required for coupling actin fibers to cell junctions in endothelial cells. Interacts through its WW 2 domain with SYNPO and through its PDZ 5 domain with ACTN4. Interacts with cytoplasmic domain of ADGRB1. Interacts via its WW domains with DRPLA. Interacts with ESAM, LRP2 and CXADR. May interact with CTNNB1. Interacts through its PDZ 1 domain with NET1. Interacts with ASIC3 and AMOT. Interacts with FCHSD2. Interacts with IGSF5/JAM4 and through its PDZ 2 and 3 domains with NPHS1 forming a tripartite complex. Interacts with DDN. Interacts with DLL1. Interacts with KCNJ10 and possibly with KCNJ10/KCNJ16 heterodimer; this interaction may facilitate KCNJ10/KCNJ16 potassium channel expression at the basolateral membrane in kidney tubular cells. Interacts with PRRG4 (via cytoplasmic domain). As to quaternary structure, interacts (via PDZ domain) with RAPGEF2. In terms of tissue distribution, widely expressed with the exception of skeletal muscle. Isoform 1, isoform 2 and isoform 6 are highly expressed in colon, kidney, lung, liver, and pancreas. Isoform 5 is predominantly expressed in brain and heart. Isoform 3 and isoform 4 are highly expressed in pancreas and brain.

The protein resides in the cell junction. It localises to the tight junction. Its subcellular location is the cell membrane. Its function is as follows. Plays a role in coupling actin fibers to cell junctions in endothelial cells, via its interaction with AMOTL2 and CDH5. May regulate acid-induced ASIC3 currents by modulating its expression at the cell surface. This Homo sapiens (Human) protein is Membrane-associated guanylate kinase, WW and PDZ domain-containing protein 1 (MAGI1).